A 95-amino-acid chain; its full sequence is Aspartyl/glutamyl-tRNA(Asn/Gln) amidotransferase subunit C (95 aa).

It belongs to the GatC family. In terms of assembly, heterotrimer of A, B and C subunits.

It catalyses the reaction L-glutamyl-tRNA(Gln) + L-glutamine + ATP + H2O = L-glutaminyl-tRNA(Gln) + L-glutamate + ADP + phosphate + H(+). The enzyme catalyses L-aspartyl-tRNA(Asn) + L-glutamine + ATP + H2O = L-asparaginyl-tRNA(Asn) + L-glutamate + ADP + phosphate + 2 H(+). Its function is as follows. Allows the formation of correctly charged Asn-tRNA(Asn) or Gln-tRNA(Gln) through the transamidation of misacylated Asp-tRNA(Asn) or Glu-tRNA(Gln) in organisms which lack either or both of asparaginyl-tRNA or glutaminyl-tRNA synthetases. The reaction takes place in the presence of glutamine and ATP through an activated phospho-Asp-tRNA(Asn) or phospho-Glu-tRNA(Gln). This chain is Aspartyl/glutamyl-tRNA(Asn/Gln) amidotransferase subunit C, found in Nitrobacter winogradskyi (strain ATCC 25391 / DSM 10237 / CIP 104748 / NCIMB 11846 / Nb-255).